A 376-amino-acid polypeptide reads, in one-letter code: tRNA-specific 2-thiouridylase MnmA (376 aa).

ATP is bound by residues 19 to 26 and methionine 45; that span reads GMSGGVDS. Positions 105 to 107 are interaction with target base in tRNA; it reads NPD. Cysteine 110 serves as the catalytic Nucleophile. An intrachain disulfide couples cysteine 110 to cysteine 210. Residue glycine 134 participates in ATP binding. Residues 160-162 are interaction with tRNA; it reads KDQ. The Cysteine persulfide intermediate role is filled by cysteine 210. Residues 326–327 are interaction with tRNA; it reads RY.

The protein belongs to the MnmA/TRMU family.

It localises to the cytoplasm. The enzyme catalyses S-sulfanyl-L-cysteinyl-[protein] + uridine(34) in tRNA + AH2 + ATP = 2-thiouridine(34) in tRNA + L-cysteinyl-[protein] + A + AMP + diphosphate + H(+). Catalyzes the 2-thiolation of uridine at the wobble position (U34) of tRNA, leading to the formation of s(2)U34. The protein is tRNA-specific 2-thiouridylase MnmA of Bordetella petrii (strain ATCC BAA-461 / DSM 12804 / CCUG 43448).